We begin with the raw amino-acid sequence, 476 residues long: Glycogen synthase (476 aa).

Residue Lys-15 coordinates ADP-alpha-D-glucose.

It belongs to the glycosyltransferase 1 family. Bacterial/plant glycogen synthase subfamily.

It catalyses the reaction [(1-&gt;4)-alpha-D-glucosyl](n) + ADP-alpha-D-glucose = [(1-&gt;4)-alpha-D-glucosyl](n+1) + ADP + H(+). It functions in the pathway glycan biosynthesis; glycogen biosynthesis. Synthesizes alpha-1,4-glucan chains using ADP-glucose. The protein is Glycogen synthase of Yersinia pseudotuberculosis serotype IB (strain PB1/+).